A 330-amino-acid chain; its full sequence is Putative aminopeptidase (330 aa).

Residues H65 and D168 each contribute to the a divalent metal cation site. E198 serves as the catalytic Proton acceptor. Positions 199, 221, and 307 each coordinate a divalent metal cation.

The protein belongs to the peptidase M42 family. A divalent metal cation is required as a cofactor.

The protein is Putative aminopeptidase (celM) of Acetivibrio thermocellus (Hungateiclostridium thermocellum).